The chain runs to 353 residues: Photosystem II protein D1 (353 aa).

Thr2 carries the N-acetylthreonine modification. Thr2 is modified (phosphothreonine). 3 consecutive transmembrane segments (helical) span residues 29 to 46 (YIGWFGVLMIPTLLTATS), 118 to 133 (HFLLGVACYMGREWEL), and 142 to 156 (WIAVAYSAPVAAAAA). His118 contacts chlorophyll a. Tyr126 is a binding site for pheophytin a. [CaMn4O5] cluster-binding residues include Asp170 and Glu189. A helical membrane pass occupies residues 197-218 (FHMLGVAGVFGGSLFSAMHGSL). His198 serves as a coordination point for chlorophyll a. Residues His215 and 264–265 (SF) contribute to the a quinone site. Residue His215 participates in Fe cation binding. His272 contacts Fe cation. Residues 274–288 (FLAAWPVVGIWFTAL) traverse the membrane as a helical segment. [CaMn4O5] cluster is bound by residues His332, Glu333, Asp342, and Ala344. Residues 345 to 353 (AVEAPSTNG) constitute a propeptide that is removed on maturation.

It belongs to the reaction center PufL/M/PsbA/D family. As to quaternary structure, PSII is composed of 1 copy each of membrane proteins PsbA, PsbB, PsbC, PsbD, PsbE, PsbF, PsbH, PsbI, PsbJ, PsbK, PsbL, PsbM, PsbT, PsbX, PsbY, PsbZ, Psb30/Ycf12, at least 3 peripheral proteins of the oxygen-evolving complex and a large number of cofactors. It forms dimeric complexes. It depends on The D1/D2 heterodimer binds P680, chlorophylls that are the primary electron donor of PSII, and subsequent electron acceptors. It shares a non-heme iron and each subunit binds pheophytin, quinone, additional chlorophylls, carotenoids and lipids. D1 provides most of the ligands for the Mn4-Ca-O5 cluster of the oxygen-evolving complex (OEC). There is also a Cl(-1) ion associated with D1 and D2, which is required for oxygen evolution. The PSII complex binds additional chlorophylls, carotenoids and specific lipids. as a cofactor. Tyr-161 forms a radical intermediate that is referred to as redox-active TyrZ, YZ or Y-Z. Post-translationally, C-terminally processed by CTPA; processing is essential to allow assembly of the oxygen-evolving complex and thus photosynthetic growth.

The protein localises to the plastid. The protein resides in the chloroplast thylakoid membrane. The enzyme catalyses 2 a plastoquinone + 4 hnu + 2 H2O = 2 a plastoquinol + O2. Photosystem II (PSII) is a light-driven water:plastoquinone oxidoreductase that uses light energy to abstract electrons from H(2)O, generating O(2) and a proton gradient subsequently used for ATP formation. It consists of a core antenna complex that captures photons, and an electron transfer chain that converts photonic excitation into a charge separation. The D1/D2 (PsbA/PsbD) reaction center heterodimer binds P680, the primary electron donor of PSII as well as several subsequent electron acceptors. This Nandina domestica (Heavenly bamboo) protein is Photosystem II protein D1.